The primary structure comprises 528 residues: Lysine--tRNA ligase (528 aa).

A 'HIGH' region motif is present at residues 36–44 (PSGTVHIGN). Residues 287–291 (KMSSS) carry the 'KMSKS' region motif.

This sequence belongs to the class-I aminoacyl-tRNA synthetase family.

Its subcellular location is the cytoplasm. The enzyme catalyses tRNA(Lys) + L-lysine + ATP = L-lysyl-tRNA(Lys) + AMP + diphosphate. This chain is Lysine--tRNA ligase (lysS), found in Treponema pallidum (strain Nichols).